The following is a 237-amino-acid chain: Lectin ConGF (237 aa).

2 residues coordinate Mn(2+): Glu-8 and Asp-10. Residues Asp-10, Tyr-12, Asn-14, and Asp-19 each coordinate Ca(2+). Asn-14 provides a ligand contact to a carbohydrate. Residues Asp-19 and His-24 each contribute to the Mn(2+) site. Residues Leu-99, Tyr-100, Asp-208, and Arg-228 each coordinate a carbohydrate.

Belongs to the leguminous lectin family. As to quaternary structure, homotetramer; dimer of dimers. In terms of processing, concanavalin A-like lectins of the Diocleinae subtribe undergo proteolytic processing referred to as circular permutation. The propeptide is split into an N-terminal and a C-terminal part, the gamma and beta chain, respectively. These are then religated in beta-gamma order to form the mature alpha chain. The beta and gamma chains can often be detected in cell extracts. Residues 1-118 of the mature chain, as displayed here, probably constitute the beta chain in the propeptide, residues 119-237 the gamma chain.

In terms of biological role, lectin. Induces paw edema in mice. Has a weak vasorelaxant effect on rat aorta. Has anti-inflammatory and anti-nociceptive effects. This Canavalia grandiflora (Jackbean) protein is Lectin ConGF.